A 146-amino-acid polypeptide reads, in one-letter code: Hemoglobin subunit beta (146 aa).

N-acetylvaline is present on valine 1. The Globin domain occupies 2 to 146 (HLTGEEKAAV…VANALAHKYH (145 aa)). Threonine 12 carries the post-translational modification Phosphothreonine. Serine 44 bears the Phosphoserine mark. Lysine 59 carries the N6-acetyllysine modification. Histidine 63 contacts heme b. Lysine 82 carries the N6-acetyllysine modification. Histidine 92 lines the heme b pocket. Residue cysteine 93 is modified to S-nitrosocysteine. Lysine 144 is modified (N6-acetyllysine).

Belongs to the globin family. Heterotetramer of two alpha chains and two beta chains. In terms of tissue distribution, red blood cells.

Its function is as follows. Involved in oxygen transport from the lung to the various peripheral tissues. The sequence is that of Hemoglobin subunit beta (HBB) from Aotus trivirgatus (Three-striped night monkey).